The primary structure comprises 167 residues: Small ribosomal subunit protein uS5 (167 aa).

One can recognise an S5 DRBM domain in the interval 11–74 (LQEKLIAVNR…DKARRNMTTI (64 aa)).

The protein belongs to the universal ribosomal protein uS5 family. In terms of assembly, part of the 30S ribosomal subunit. Contacts proteins S4 and S8.

Functionally, with S4 and S12 plays an important role in translational accuracy. Its function is as follows. Located at the back of the 30S subunit body where it stabilizes the conformation of the head with respect to the body. In Baumannia cicadellinicola subsp. Homalodisca coagulata, this protein is Small ribosomal subunit protein uS5.